Here is a 264-residue protein sequence, read N- to C-terminus: Thymidylate synthase (264 aa).

Arg-21 provides a ligand contact to dUMP. Residue His-51 coordinates (6R)-5,10-methylene-5,6,7,8-tetrahydrofolate. Residue 126–127 (RR) participates in dUMP binding. The Nucleophile role is filled by Cys-146. Residues 166–169 (RSAD), Asn-177, and 207–209 (HIY) each bind dUMP. Residue Asp-169 participates in (6R)-5,10-methylene-5,6,7,8-tetrahydrofolate binding. (6R)-5,10-methylene-5,6,7,8-tetrahydrofolate is bound at residue Ala-263.

The protein belongs to the thymidylate synthase family. Bacterial-type ThyA subfamily. As to quaternary structure, homodimer.

The protein resides in the cytoplasm. The catalysed reaction is dUMP + (6R)-5,10-methylene-5,6,7,8-tetrahydrofolate = 7,8-dihydrofolate + dTMP. It functions in the pathway pyrimidine metabolism; dTTP biosynthesis. In terms of biological role, catalyzes the reductive methylation of 2'-deoxyuridine-5'-monophosphate (dUMP) to 2'-deoxythymidine-5'-monophosphate (dTMP) while utilizing 5,10-methylenetetrahydrofolate (mTHF) as the methyl donor and reductant in the reaction, yielding dihydrofolate (DHF) as a by-product. This enzymatic reaction provides an intracellular de novo source of dTMP, an essential precursor for DNA biosynthesis. This Bacteroides fragilis (strain ATCC 25285 / DSM 2151 / CCUG 4856 / JCM 11019 / LMG 10263 / NCTC 9343 / Onslow / VPI 2553 / EN-2) protein is Thymidylate synthase.